Consider the following 240-residue polypeptide: tRNA (guanine-N(7)-)-methyltransferase (240 aa).

A compositionally biased stretch (polar residues) spans 1-10; that stretch reads MTESQDTPIT. The segment at 1-20 is disordered; the sequence is MTESQDTPITTDGEARPHRR. 4 residues coordinate S-adenosyl-L-methionine: E70, E95, D122, and D145. The active site involves D145. Residues K149, D181, and 218–221 each bind substrate; that span reads TKFE.

The protein belongs to the class I-like SAM-binding methyltransferase superfamily. TrmB family.

The enzyme catalyses guanosine(46) in tRNA + S-adenosyl-L-methionine = N(7)-methylguanosine(46) in tRNA + S-adenosyl-L-homocysteine. It participates in tRNA modification; N(7)-methylguanine-tRNA biosynthesis. Functionally, catalyzes the formation of N(7)-methylguanine at position 46 (m7G46) in tRNA. The chain is tRNA (guanine-N(7)-)-methyltransferase from Pseudomonas putida (strain W619).